A 461-amino-acid polypeptide reads, in one-letter code: MSSNPFIGLRNWIRGAQQWYLTTPKRALQEAYEAALKIRAIELEHFDGQPISPLNLPVGEVSSYFETELKQLLKTIRMRMMEFRASRQILPLAPFQSPPTPVNEGINGATETYTVTATVSSTTAEPSVYEKLRVIDATLNRYKRQREKELDALARPSLSRQDPQQRQQAAALDKIAEDSLYLSEYISDDLTSDSKLDSSSFIPRSILRTADRFRRELNSDEATEAEVVRDFRTSKLRTRLAVRFMLLLVILPLLTQQISKALIVSPLVNHFKAVGQIERIINSQLEDNILDELARFENKIRFESLVSNVPIAPEEIQNRIREKAIELSTEYQKELIEPLKNILSDALGFTVFLALVFTGQRQLAIVKTFLDEVVYGLSDSAKAFMIILFTDVFVGFHSPHGWEVLVNNTLEHFGFPRNEDFINMFIATFPVMLDTVFKYWIFRYLNQISPSAVATYKNMNE.

4 helical membrane-spanning segments follow: residues Phe244 to Val264, Leu339 to Gly359, Ile386 to Val406, and Phe421 to Ile441.

It belongs to the CemA family.

The protein resides in the cell inner membrane. Functionally, required for H(+) efflux immediately after light irradiation to form a rapid H(+) concentration gradient across the thylakoid membranes. Together with PxcL, contributes to transient H(+) uptake following dark to light transition. In Thermosynechococcus vestitus (strain NIES-2133 / IAM M-273 / BP-1), this protein is Proton extrusion protein PxcA.